A 321-amino-acid polypeptide reads, in one-letter code: Cytochrome c biogenesis protein CcsA (321 aa).

The next 7 membrane-spanning stretches (helical) occupy residues 9–29, 44–64, 68–88, 143–163, 225–245, 259–273, and 288–308; these read ILTH…LITL, GMIA…VSSG, LSNL…LHTI, MLLS…LLII, VISL…VWAN, TWAF…IYLH, and VASI…LLGI.

Belongs to the CcmF/CycK/Ccl1/NrfE/CcsA family. May interact with Ccs1.

It localises to the plastid. Its subcellular location is the chloroplast thylakoid membrane. Required during biogenesis of c-type cytochromes (cytochrome c6 and cytochrome f) at the step of heme attachment. This chain is Cytochrome c biogenesis protein CcsA, found in Saccharum hybrid (Sugarcane).